A 329-amino-acid chain; its full sequence is Fructose-1,6-bisphosphatase class 1 (329 aa).

Residues E84, D103, L105, and D106 each coordinate Mg(2+). Residues 106-109, N196, and K262 contribute to the substrate site; that span reads DGSS. E268 contributes to the Mg(2+) binding site.

Belongs to the FBPase class 1 family. Homotetramer. It depends on Mg(2+) as a cofactor.

The protein resides in the cytoplasm. It catalyses the reaction beta-D-fructose 1,6-bisphosphate + H2O = beta-D-fructose 6-phosphate + phosphate. It participates in carbohydrate biosynthesis; gluconeogenesis. The polypeptide is Fructose-1,6-bisphosphatase class 1 (Shewanella loihica (strain ATCC BAA-1088 / PV-4)).